A 55-amino-acid polypeptide reads, in one-letter code: Large ribosomal subunit protein bL33 (55 aa).

Belongs to the bacterial ribosomal protein bL33 family.

This is Large ribosomal subunit protein bL33 from Klebsiella pneumoniae (strain 342).